The primary structure comprises 189 residues: dCTP deaminase (189 aa).

Residues 112–117 (KSTYAR), 136–138 (TLE), Gln157, Tyr171, and Gln181 each bind dCTP. Residue Glu138 is the Proton donor/acceptor of the active site.

The protein belongs to the dCTP deaminase family. In terms of assembly, homotrimer.

It catalyses the reaction dCTP + H2O + H(+) = dUTP + NH4(+). Its pathway is pyrimidine metabolism; dUMP biosynthesis; dUMP from dCTP (dUTP route): step 1/2. Catalyzes the deamination of dCTP to dUTP. The polypeptide is dCTP deaminase (Methylacidiphilum infernorum (isolate V4) (Methylokorus infernorum (strain V4))).